We begin with the raw amino-acid sequence, 548 residues long: Chaperonin GroEL (548 aa).

Residues 29 to 32 (TMGP), Lys-50, 86 to 90 (DGTTT), Gly-414, 478 to 480 (NAA), and Asp-494 each bind ATP.

It belongs to the chaperonin (HSP60) family. Forms a cylinder of 14 subunits composed of two heptameric rings stacked back-to-back. Interacts with the co-chaperonin GroES.

The protein localises to the cytoplasm. It carries out the reaction ATP + H2O + a folded polypeptide = ADP + phosphate + an unfolded polypeptide.. Functionally, together with its co-chaperonin GroES, plays an essential role in assisting protein folding. The GroEL-GroES system forms a nano-cage that allows encapsulation of the non-native substrate proteins and provides a physical environment optimized to promote and accelerate protein folding. Its function is as follows. May play a protective role against the defense mechanisms generated by the infected macrophages. The sequence is that of Chaperonin GroEL from Legionella pneumophila.